Here is an 841-residue protein sequence, read N- to C-terminus: Protein translocase subunit SecA (841 aa).

ATP contacts are provided by residues glutamine 86, 104–108 (GEGKT), and aspartate 493. The disordered stretch occupies residues 788-822 (EEVAEGKAVRPSANGQEDKKAKRKPVRKAENIGRN). Zn(2+) contacts are provided by cysteine 825, cysteine 827, cysteine 836, and cysteine 837.

This sequence belongs to the SecA family. In terms of assembly, monomer and homodimer. Part of the essential Sec protein translocation apparatus which comprises SecA, SecYEG and auxiliary proteins SecDF. Other proteins may also be involved. The cofactor is Zn(2+).

The protein resides in the cell membrane. It is found in the cytoplasm. It catalyses the reaction ATP + H2O + cellular proteinSide 1 = ADP + phosphate + cellular proteinSide 2.. In terms of biological role, part of the Sec protein translocase complex. Interacts with the SecYEG preprotein conducting channel. Has a central role in coupling the hydrolysis of ATP to the transfer of proteins into and across the cell membrane, serving as an ATP-driven molecular motor driving the stepwise translocation of polypeptide chains across the membrane. This chain is Protein translocase subunit SecA, found in Shouchella clausii (strain KSM-K16) (Alkalihalobacillus clausii).